The sequence spans 172 residues: Large ribosomal subunit protein uL10 (172 aa).

It belongs to the universal ribosomal protein uL10 family. In terms of assembly, part of the ribosomal stalk of the 50S ribosomal subunit. The N-terminus interacts with L11 and the large rRNA to form the base of the stalk. The C-terminus forms an elongated spine to which L12 dimers bind in a sequential fashion forming a multimeric L10(L12)X complex.

In terms of biological role, forms part of the ribosomal stalk, playing a central role in the interaction of the ribosome with GTP-bound translation factors. The chain is Large ribosomal subunit protein uL10 from Rhodospirillum centenum (strain ATCC 51521 / SW).